The sequence spans 506 residues: Acyl-CoA-binding domain-containing protein 5 (506 aa).

Positions 44-133 (YETRFEAAVK…MKKIIETMPM (90 aa)) constitute an ACB domain. Residues 55-64 (IQSLPKNGSF), 75-79 (YSFYK), Lys101, and Tyr120 contribute to the an acyl-CoA site. The tract at residues 175-217 (AKAVNGKAESSDSGAESEEEEAQEELKGAEQSGSDDKKMMTKS) is disordered. Positions 181-209 (KAESSDSGAESEEEEAQEELKGAEQSGSD) form a coiled coil. 6 positions are modified to phosphoserine: Ser184, Ser185, Ser187, Ser191, Ser206, and Ser233. Positions 198–217 (EELKGAEQSGSDDKKMMTKS) are enriched in basic and acidic residues. Disordered stretches follow at residues 234-302 (FAQD…CDSM) and 345-417 (AVKG…RGSR). Residues 238 to 257 (SDIHTDSSRSARRSEDKKPT) are compositionally biased toward basic and acidic residues. The segment covering 258-267 (DQSSQQTGNT) has biased composition (polar residues). Ser301 carries the phosphoserine modification. Positions 348 to 360 (GKGEVKHGGEDGR) are enriched in basic and acidic residues. Ser403 carries the phosphoserine modification. Residues 406 to 416 (DGERWGSDRGS) are compositionally biased toward basic and acidic residues. Residues 426–451 (LVLIRLQEDMQNVLQRLHKLETLTAS) adopt a coiled-coil conformation. Lys444 carries the N6-acetyllysine modification. A helical membrane pass occupies residues 478–498 (GALAFAIIWPFIAQWLVHLYY).

Belongs to the ATG37 family.

It localises to the peroxisome membrane. In terms of biological role, acyl-CoA binding protein which acts as the peroxisome receptor for pexophagy but is dispensable for aggrephagy and nonselective autophagy. Binds medium- and long-chain acyl-CoA esters. The chain is Acyl-CoA-binding domain-containing protein 5 (Acbd5) from Rattus norvegicus (Rat).